The primary structure comprises 427 residues: Zinc finger protein 2 (427 aa).

One can recognise a KRAB domain in the interval 14–85; it reads VTFEDVAVTF…GFHGSEEKTW (72 aa). A disordered region spans residues 111-142; the sequence is HRKQSSLCPKREIQTLTGGPEPEKESPKARTC. 8 consecutive C2H2-type zinc fingers follow at residues 169 to 191, 197 to 219, 225 to 247, 253 to 275, 281 to 303, 309 to 331, 337 to 359, and 365 to 387; these read QECS…QRTH, YDCP…LMFH, YECD…QRIH, FKCN…QRIH, YECQ…LLTH, YECR…QKVH, YQCS…QKIH, and YECG…QRVH. Residues 393–415 form a C2H2-type 9; degenerate zinc finger; that stretch reads FECSVCGKEFSSKSSIIQHQRRY.

This sequence belongs to the krueppel C2H2-type zinc-finger protein family.

Its subcellular location is the nucleus. May be involved in transcriptional regulation. The protein is Zinc finger protein 2 of Mus musculus (Mouse).